Consider the following 285-residue polypeptide: Polyamine aminopropyltransferase (285 aa).

Positions 5-241 constitute a PABS domain; the sequence is QDWFTESYPD…GWWSATMAGK (237 aa). S-methyl-5'-thioadenosine is bound at residue Gln-35. Residues His-66 and Asp-90 each coordinate spermidine. Residues Asp-110 and 141–142 contribute to the S-methyl-5'-thioadenosine site; that span reads DG. Asp-160 functions as the Proton acceptor in the catalytic mechanism. Spermidine is bound at residue 160 to 163; sequence DSTD. Pro-167 contributes to the S-methyl-5'-thioadenosine binding site.

This sequence belongs to the spermidine/spermine synthase family. In terms of assembly, homodimer or homotetramer.

Its subcellular location is the cytoplasm. It catalyses the reaction S-adenosyl 3-(methylsulfanyl)propylamine + putrescine = S-methyl-5'-thioadenosine + spermidine + H(+). It participates in amine and polyamine biosynthesis; spermidine biosynthesis; spermidine from putrescine: step 1/1. Catalyzes the irreversible transfer of a propylamine group from the amino donor S-adenosylmethioninamine (decarboxy-AdoMet) to putrescine (1,4-diaminobutane) to yield spermidine. The chain is Polyamine aminopropyltransferase from Methylococcus capsulatus (strain ATCC 33009 / NCIMB 11132 / Bath).